The chain runs to 306 residues: Ornithine carbamoyltransferase (306 aa).

Carbamoyl phosphate contacts are provided by residues 50–53 (STRT), Gln-77, Arg-101, and 128–131 (HPCQ). L-ornithine-binding positions include Asn-160, Asp-224, and 228 to 229 (SM). Residues 264–265 (CL) and Arg-292 each bind carbamoyl phosphate.

The protein belongs to the aspartate/ornithine carbamoyltransferase superfamily. OTCase family.

It is found in the cytoplasm. It catalyses the reaction carbamoyl phosphate + L-ornithine = L-citrulline + phosphate + H(+). Its pathway is amino-acid biosynthesis; L-arginine biosynthesis; L-arginine from L-ornithine and carbamoyl phosphate: step 1/3. Functionally, reversibly catalyzes the transfer of the carbamoyl group from carbamoyl phosphate (CP) to the N(epsilon) atom of ornithine (ORN) to produce L-citrulline. The polypeptide is Ornithine carbamoyltransferase (Mycobacterium leprae (strain TN)).